We begin with the raw amino-acid sequence, 432 residues long: Serine--tRNA ligase (432 aa).

Residue 230-232 (TAE) participates in L-serine binding. Position 261–263 (261–263 (RSE)) interacts with ATP. Position 284 (E284) interacts with L-serine. 348 to 351 (EVSS) contributes to the ATP binding site. Position 383 (S383) interacts with L-serine.

The protein belongs to the class-II aminoacyl-tRNA synthetase family. Type-1 seryl-tRNA synthetase subfamily. Homodimer. The tRNA molecule binds across the dimer.

It is found in the cytoplasm. It catalyses the reaction tRNA(Ser) + L-serine + ATP = L-seryl-tRNA(Ser) + AMP + diphosphate + H(+). It carries out the reaction tRNA(Sec) + L-serine + ATP = L-seryl-tRNA(Sec) + AMP + diphosphate + H(+). It functions in the pathway aminoacyl-tRNA biosynthesis; selenocysteinyl-tRNA(Sec) biosynthesis; L-seryl-tRNA(Sec) from L-serine and tRNA(Sec): step 1/1. Functionally, catalyzes the attachment of serine to tRNA(Ser). Is also able to aminoacylate tRNA(Sec) with serine, to form the misacylated tRNA L-seryl-tRNA(Sec), which will be further converted into selenocysteinyl-tRNA(Sec). This chain is Serine--tRNA ligase, found in Limosilactobacillus fermentum (strain NBRC 3956 / LMG 18251) (Lactobacillus fermentum).